Consider the following 563-residue polypeptide: Germacrene-A synthase (563 aa).

Mg(2+) is bound by residues aspartate 316, aspartate 320, aspartate 461, and glutamate 469. The short motif at 316-320 is the DDXXD motif element; the sequence is DDIYD.

The protein belongs to the terpene synthase family. Tpsa subfamily. Mg(2+) is required as a cofactor. Expressed in young leaves. Detected in trichomes and cones.

The enzyme catalyses (2E,6E)-farnesyl diphosphate = (+)-(R)-germacrene A + diphosphate. Its pathway is secondary metabolite biosynthesis; terpenoid biosynthesis. Its function is as follows. Sesquiterpene synthase that catalyzes the formation of germacrene A. Can use farnesyl diphosphate as substrate, but not geranyl diphosphate or geranylgeranyl diphosphate. Beta-elemene, the initially measured product in the assay, is derived nonenzymatically from germacrene A. This is Germacrene-A synthase from Humulus lupulus (European hop).